The chain runs to 211 residues: Protein 33K (211 aa).

Disordered regions lie at residues 1-95 and 107-140; these read MPPK…PCSL and AGSP…QDSP. The span at 24–65 shows a compositional bias: acidic residues; the sequence is DEEETWDDSQAEEVSDEEAEEQMESWDSLDEEDLEDVEEETI. Positions 83-92 are enriched in pro residues; it reads KTIPPLPPQP. Positions 129-140 are enriched in polar residues; it reads TSSAIATRQDSP. The interval 154 to 181 is necessary for nuclear subcellular location; the sequence is YAIFQQSRGQQLELKVKNRSLRSLTRSC. An RS-repeat; required for splicing enhancer activity region spans residues 160 to 180; the sequence is SRGQQLELKVKNRSLRSLTRS.

The protein belongs to the adenoviridae splicing factor family. In terms of assembly, homooligomer. Interacts with DBP; this interaction occurs at a unique vertex during genome packaging. Interacts with IVa2; this interaction occurs at a unique vertex during genome packaging and seems to potentiate IVa2 and 33K oligomerization. Post-translationally, phosphorylated in vitro by human PKA and PRKDC. PRKDC inhibits, whereas PKA activates the splicing factor.

The protein resides in the host nucleus. Promotes alternative splicing of late transcripts by promoting splicing at weak 3' splice sites. Required for the temporal activation of major late pre-mRNA splicing at late times of infection. Induces the splicing and expression of the late capsid vertex protein. Functionally, probably functions as the small terminase that is part of the molecular motor that translocates genomic DNA in empty capsid during DNA packaging. This motor is located at a unique vertex and comprises at least the IVa2 ATPase, the small terminase 33K and probably a portal. Forms a ring-like structure of about 17 nm in which genomic DNA is translocated into the capsid. Stimulates IVa2 ATPase activity in the presence of the viral genome. Once the DNA is packaged, the terminase detaches: the 33K protein is present in the empty particles, but not in the mature virions. Also involved in virion assembly. The sequence is that of Protein 33K from Human adenovirus F serotype 40 (HAdV-40).